Reading from the N-terminus, the 348-residue chain is Aspartate carbamoyltransferase catalytic subunit (348 aa).

2 residues coordinate carbamoyl phosphate: Arg59 and Thr60. Residue Lys87 participates in L-aspartate binding. Residues Arg109, His142, and Gln145 each contribute to the carbamoyl phosphate site. Residues Arg182 and Arg253 each contribute to the L-aspartate site. Residues Gly294 and Pro295 each coordinate carbamoyl phosphate.

The protein belongs to the aspartate/ornithine carbamoyltransferase superfamily. ATCase family. Heterododecamer (2C3:3R2) of six catalytic PyrB chains organized as two trimers (C3), and six regulatory PyrI chains organized as three dimers (R2).

The enzyme catalyses carbamoyl phosphate + L-aspartate = N-carbamoyl-L-aspartate + phosphate + H(+). It participates in pyrimidine metabolism; UMP biosynthesis via de novo pathway; (S)-dihydroorotate from bicarbonate: step 2/3. In terms of biological role, catalyzes the condensation of carbamoyl phosphate and aspartate to form carbamoyl aspartate and inorganic phosphate, the committed step in the de novo pyrimidine nucleotide biosynthesis pathway. In Prochlorococcus marinus (strain MIT 9313), this protein is Aspartate carbamoyltransferase catalytic subunit.